Reading from the N-terminus, the 956-residue chain is Golgin candidate 5 (956 aa).

2 disordered regions span residues 70–230 (MSFM…QHKI) and 278–298 (IFES…SSDE). 2 stretches are compositionally biased toward basic and acidic residues: residues 77-89 (SDEK…DSVR) and 118-129 (ANKETNVRREAD). 2 stretches are compositionally biased toward polar residues: residues 160 to 177 (EYSL…SLQP) and 184 to 193 (TASQDSQPEQ). Basic and acidic residues predominate over residues 206 to 219 (SEAKEVTVENKDTV). Residues 333 to 765 (SDSADVILEL…LIQKDLEREK (433 aa)) adopt a coiled-coil conformation. Ser-793 is modified (phosphoserine). Residues 851-951 (SAYEATLRQK…EMYREQVNML (101 aa)) adopt a coiled-coil conformation.

In terms of assembly, interacts with RABH1B and RABH1C, but not with RABD1 or RABD2A.

It localises to the golgi apparatus. The protein localises to the cytoplasm. Its function is as follows. Golgi matrix protein playing a role in tethering of vesicles to Golgi membranes and in maintaining the overall structure of the Golgi apparatus. The sequence is that of Golgin candidate 5 (GC5) from Arabidopsis thaliana (Mouse-ear cress).